A 183-amino-acid chain; its full sequence is Glutathione-regulated potassium-efflux system ancillary protein KefG (183 aa).

It belongs to the NAD(P)H dehydrogenase (quinone) family. KefG subfamily. Interacts with KefB.

It is found in the cell inner membrane. It catalyses the reaction a quinone + NADH + H(+) = a quinol + NAD(+). It carries out the reaction a quinone + NADPH + H(+) = a quinol + NADP(+). Its function is as follows. Regulatory subunit of a potassium efflux system that confers protection against electrophiles. Required for full activity of KefB. The sequence is that of Glutathione-regulated potassium-efflux system ancillary protein KefG from Yersinia pestis bv. Antiqua (strain Angola).